Here is a 1058-residue protein sequence, read N- to C-terminus: Carbamoyl phosphate synthase large chain (1058 aa).

The carboxyphosphate synthetic domain stretch occupies residues 1-401 (MAKRTDIKKI…CLLKACRSLE (401 aa)). R129, R169, G175, G176, R208, I210, E215, G241, I242, H243, Q284, and E298 together coordinate ATP. In terms of domain architecture, ATP-grasp 1 spans 133–327 (KQLMKELGEP…IAKIAAKIAV (195 aa)). Residues Q284, E298, and N300 each contribute to the Mg(2+) site. Positions 284, 298, and 300 each coordinate Mn(2+). Residues 402-546 (IGVHHNELKG…YSTYEWENES (145 aa)) are oligomerization domain. The segment at 547 to 929 (IKSEKESVIV…ALYKAFEASY (383 aa)) is carbamoyl phosphate synthetic domain. The ATP-grasp 2 domain occupies 671–861 (EKALKELGIP…MAQVATKLIL (191 aa)). Positions 707, 746, 748, 752, 777, 778, 779, 780, 820, and 832 each coordinate ATP. 3 residues coordinate Mg(2+): Q820, E832, and N834. Positions 820, 832, and 834 each coordinate Mn(2+). Positions 930-1058 (LHMPEYGTIV…ESRTFSIEAI (129 aa)) constitute an MGS-like domain. An allosteric domain region spans residues 930–1058 (LHMPEYGTIV…ESRTFSIEAI (129 aa)).

It belongs to the CarB family. Composed of two chains; the small (or glutamine) chain promotes the hydrolysis of glutamine to ammonia, which is used by the large (or ammonia) chain to synthesize carbamoyl phosphate. Tetramer of heterodimers (alpha,beta)4. Mg(2+) serves as cofactor. It depends on Mn(2+) as a cofactor.

The enzyme catalyses hydrogencarbonate + L-glutamine + 2 ATP + H2O = carbamoyl phosphate + L-glutamate + 2 ADP + phosphate + 2 H(+). It catalyses the reaction hydrogencarbonate + NH4(+) + 2 ATP = carbamoyl phosphate + 2 ADP + phosphate + 2 H(+). The protein operates within amino-acid biosynthesis; L-arginine biosynthesis; carbamoyl phosphate from bicarbonate: step 1/1. It functions in the pathway pyrimidine metabolism; UMP biosynthesis via de novo pathway; (S)-dihydroorotate from bicarbonate: step 1/3. Its function is as follows. Large subunit of the glutamine-dependent carbamoyl phosphate synthetase (CPSase). CPSase catalyzes the formation of carbamoyl phosphate from the ammonia moiety of glutamine, carbonate, and phosphate donated by ATP, constituting the first step of 2 biosynthetic pathways, one leading to arginine and/or urea and the other to pyrimidine nucleotides. The large subunit (synthetase) binds the substrates ammonia (free or transferred from glutamine from the small subunit), hydrogencarbonate and ATP and carries out an ATP-coupled ligase reaction, activating hydrogencarbonate by forming carboxy phosphate which reacts with ammonia to form carbamoyl phosphate. The polypeptide is Carbamoyl phosphate synthase large chain (Streptococcus equi subsp. equi (strain 4047)).